The chain runs to 463 residues: Ribosomal protein uS12 methylthiotransferase RimO (463 aa).

A disordered region spans residues 1 to 26 (MPAMSQNPPLLRPDLAPAPIFDTSRR). Over residues 8 to 19 (PPLLRPDLAPAP) the composition is skewed to low complexity. Residues 30-140 (PTIGMVSLGC…VLDAVHHAVP (111 aa)) enclose the MTTase N-terminal domain. Residues C39, C75, C104, C171, C175, and C178 each contribute to the [4Fe-4S] cluster site. A Radical SAM core domain is found at 157 to 395 (LTPRHYSYLK…MQKAQAISEA (239 aa)). The region spanning 398–463 (AAKVGHRIEV…AGEYDLWGRL (66 aa)) is the TRAM domain.

This sequence belongs to the methylthiotransferase family. RimO subfamily. The cofactor is [4Fe-4S] cluster.

It localises to the cytoplasm. The catalysed reaction is L-aspartate(89)-[ribosomal protein uS12]-hydrogen + (sulfur carrier)-SH + AH2 + 2 S-adenosyl-L-methionine = 3-methylsulfanyl-L-aspartate(89)-[ribosomal protein uS12]-hydrogen + (sulfur carrier)-H + 5'-deoxyadenosine + L-methionine + A + S-adenosyl-L-homocysteine + 2 H(+). Its function is as follows. Catalyzes the methylthiolation of an aspartic acid residue of ribosomal protein uS12. The chain is Ribosomal protein uS12 methylthiotransferase RimO from Paracoccus denitrificans (strain Pd 1222).